A 76-amino-acid polypeptide reads, in one-letter code: 8.4 kDa cro protein (76 aa).

The protein is 8.4 kDa cro protein (cro-HTT) of Escherichia coli (Bacteriophage HK022).